Consider the following 250-residue polypeptide: Probable transcriptional regulatory protein Plut_1643 (250 aa).

Belongs to the TACO1 family.

The protein localises to the cytoplasm. The sequence is that of Probable transcriptional regulatory protein Plut_1643 from Chlorobium luteolum (strain DSM 273 / BCRC 81028 / 2530) (Pelodictyon luteolum).